Here is a 108-residue protein sequence, read N- to C-terminus: Anti-sigma-B factor antagonist (108 aa).

The STAS domain maps to 3–108 (LNIETTTQDK…MHVNEGTEVE (106 aa)). Ser-57 is modified (phosphoserine).

It belongs to the anti-sigma-factor antagonist family. In terms of processing, phosphorylated by RsbW on a serine residue.

In terms of biological role, positive regulator of sigma-B activity. Non-phosphorylated RsbV binds to RsbW, preventing its association with sigma-B. When phosphorylated, releases RsbW, which is then free to complex with and inactivate sigma-B. The sequence is that of Anti-sigma-B factor antagonist (rsbV) from Staphylococcus aureus (strain NCTC 8325 / PS 47).